Consider the following 170-residue polypeptide: ATP synthase F(1) complex subunit delta, mitochondrial (170 aa).

A mitochondrion-targeting transit peptide spans 1–33; sequence MIRSIIKSSNNLLKSNVAINSNKRFFATEASAT.

This sequence belongs to the ATPase epsilon chain family. As to quaternary structure, component of the ATP synthase complex composed at least of ATP5F1A/subunit alpha, ATP5F1B/subunit beta, ATP5MC1/subunit c (homooctomer), MT-ATP6/subunit a, MT-ATP8/subunit 8, ATP5ME/subunit e, ATP5MF/subunit f, ATP5MG/subunit g, ATP5MK/subunit k, ATP5MJ/subunit j, ATP5F1C/subunit gamma, ATP5F1D/subunit delta, ATP5F1E/subunit epsilon, ATP5PF/subunit F6, ATP5PB/subunit b, ATP5PD/subunit d, ATP5PO/subunit OSCP. ATP synthase complex consists of a soluble F(1) head domain (subunits alpha(3) and beta(3)) - the catalytic core - and a membrane F(0) domain - the membrane proton channel (subunits c, a, 8, e, f, g, k and j). These two domains are linked by a central stalk (subunits gamma, delta, and epsilon) rotating inside the F1 region and a stationary peripheral stalk (subunits F6, b, d, and OSCP).

It is found in the mitochondrion. The protein localises to the mitochondrion inner membrane. Subunit delta, of the mitochondrial membrane ATP synthase complex (F(1)F(0) ATP synthase or Complex V) that produces ATP from ADP in the presence of a proton gradient across the membrane which is generated by electron transport complexes of the respiratory chain. ATP synthase complex consist of a soluble F(1) head domain - the catalytic core - and a membrane F(1) domain - the membrane proton channel. These two domains are linked by a central stalk rotating inside the F(1) region and a stationary peripheral stalk. During catalysis, ATP synthesis in the catalytic domain of F(1) is coupled via a rotary mechanism of the central stalk subunits to proton translocation. In vivo, can only synthesize ATP although its ATP hydrolase activity can be activated artificially in vitro. With the central stalk subunit gamma, is essential for the biogenesis of F(1) catalytic part of the ATP synthase complex namely in the formation of F1 assembly intermediate. This Dictyostelium discoideum (Social amoeba) protein is ATP synthase F(1) complex subunit delta, mitochondrial.